A 179-amino-acid chain; its full sequence is GTP-dependent dephospho-CoA kinase (179 aa).

The GTP site is built by Asp-55, Val-57, Asp-74, Lys-76, and Glu-128.

The protein belongs to the GTP-dependent DPCK family.

It carries out the reaction 3'-dephospho-CoA + GTP = GDP + CoA + H(+). Its pathway is cofactor biosynthesis; coenzyme A biosynthesis. Catalyzes the GTP-dependent phosphorylation of the 3'-hydroxyl group of dephosphocoenzyme A to form coenzyme A (CoA). The polypeptide is GTP-dependent dephospho-CoA kinase (Saccharolobus islandicus (strain M.16.27) (Sulfolobus islandicus)).